The sequence spans 700 residues: Peroxisomal acyl-coenzyme A oxidase 3 (700 aa).

A2 is subject to N-acetylalanine. T281 bears the Phosphothreonine mark. Residues 698 to 700 (SKL) carry the Microbody targeting signal motif.

The protein belongs to the acyl-CoA oxidase family. FAD serves as cofactor.

Its subcellular location is the peroxisome. The catalysed reaction is a 2,3-saturated acyl-CoA + O2 = a (2E)-enoyl-CoA + H2O2. It catalyses the reaction (2S)-pristanoyl-CoA + O2 = (2E)-pristenoyl-CoA + H2O2. The enzyme catalyses tetracosanoyl-CoA + O2 = (2E)-tetracosenoyl-CoA + H2O2. It carries out the reaction hexadecanoyl-CoA + O2 = (2E)-hexadecenoyl-CoA + H2O2. The catalysed reaction is hexadecanedioyl-CoA + O2 = (2E)-hexadecenedioyl-CoA + H2O2. It functions in the pathway lipid metabolism; peroxisomal fatty acid beta-oxidation. Oxidizes the CoA-esters of 2-methyl-branched fatty acids. This chain is Peroxisomal acyl-coenzyme A oxidase 3 (ACOX3), found in Homo sapiens (Human).